Here is a 33-residue protein sequence, read N- to C-terminus: Brevinin 2AV (33 aa).

A disulfide bond links Cys-27 and Cys-33.

As to expression, expressed by the skin glands.

It is found in the secreted. Functionally, has antibacterial activity. This chain is Brevinin 2AV, found in Rana arvalis (Moor frog).